The primary structure comprises 425 residues: Serine--tRNA ligase (425 aa).

L-serine is bound at residue 230 to 232; the sequence is TAE. Residue 261–263 participates in ATP binding; sequence RSE. Glutamate 284 lines the L-serine pocket. 348-351 lines the ATP pocket; that stretch reads EISS. L-serine is bound at residue serine 384.

It belongs to the class-II aminoacyl-tRNA synthetase family. Type-1 seryl-tRNA synthetase subfamily. In terms of assembly, homodimer. The tRNA molecule binds across the dimer.

It localises to the cytoplasm. It catalyses the reaction tRNA(Ser) + L-serine + ATP = L-seryl-tRNA(Ser) + AMP + diphosphate + H(+). The enzyme catalyses tRNA(Sec) + L-serine + ATP = L-seryl-tRNA(Sec) + AMP + diphosphate + H(+). The protein operates within aminoacyl-tRNA biosynthesis; selenocysteinyl-tRNA(Sec) biosynthesis; L-seryl-tRNA(Sec) from L-serine and tRNA(Sec): step 1/1. Catalyzes the attachment of serine to tRNA(Ser). Is also able to aminoacylate tRNA(Sec) with serine, to form the misacylated tRNA L-seryl-tRNA(Sec), which will be further converted into selenocysteinyl-tRNA(Sec). The protein is Serine--tRNA ligase of Streptococcus sanguinis (strain SK36).